A 171-amino-acid polypeptide reads, in one-letter code: Mitoferrin-1 (171 aa).

The interval 1–40 (MELRRGGVGSQARARRMDGDSRDGGGGCKDAGSEDYENLP) is disordered. Residues 43–131 (ASLSTHMTAG…FACYENMKRT (89 aa)) form a Solcar repeat. 3 consecutive transmembrane segments (helical) span residues 45–64 (LSTHMTAGAMAGILEHSVMY), 105–125 (RGLNVMMMGAGPAHAMYFACY), and 143–163 (HLANGICKRLSGVRKVSPSTD).

This sequence belongs to the mitochondrial carrier (TC 2.A.29) family. In terms of assembly, interacts with ACB10; this interaction stabilizes SLC25A37 and enhances the function of SLC25A37 to import mitochondrial iron during erythroid differentiation.

It is found in the mitochondrion inner membrane. The enzyme catalyses Fe(2+)(in) = Fe(2+)(out). Its function is as follows. Mitochondrial iron transporter that specifically mediates iron uptake in developing erythroid cells, thereby playing an essential role in heme biosynthesis. This is Mitoferrin-1 (SLC25A37) from Bos taurus (Bovine).